Here is a 77-residue protein sequence, read N- to C-terminus: MLALTRKAGERIVIGDNIVVTVVAIKGDSIRLTIDAPKEIKIYRGEIYDAIAAENKEAAVLMDLAELTALKEFHIKK.

The protein belongs to the CsrA/RsmA family. In terms of assembly, homodimer; the beta-strands of each monomer intercalate to form a hydrophobic core, while the alpha-helices form wings that extend away from the core.

The protein resides in the cytoplasm. A translational regulator that binds mRNA to regulate translation initiation and/or mRNA stability. Usually binds in the 5'-UTR at or near the Shine-Dalgarno sequence preventing ribosome-binding, thus repressing translation. Its main target seems to be the major flagellin gene, while its function is anatagonized by FliW. This Desulfitobacterium hafniense (strain DSM 10664 / DCB-2) protein is Translational regulator CsrA.